A 100-amino-acid chain; its full sequence is Pancreatic trypsin inhibitor (100 aa).

The signal sequence occupies residues 1-21 (MKMSRLCLSVALLVLLGTLAA). Positions 22 to 35 (STPGCDTSNQAKAQ) are excised as a propeptide. In terms of domain architecture, BPTI/Kunitz inhibitor spans 40 to 90 (CLEPPYTGPCKARIIRYFYNAKAGLCQTFVYGGCRAKRNNFKSAEDCMRTC). 3 disulfide bridges follow: Cys40–Cys90, Cys49–Cys73, and Cys65–Cys86. A propeptide spanning residues 94 to 100 (IGPWENL) is cleaved from the precursor.

The protein resides in the secreted. Functionally, inhibits trypsin, kallikrein, chymotrypsin, and plasmin. The chain is Pancreatic trypsin inhibitor from Bos taurus (Bovine).